Reading from the N-terminus, the 378-residue chain is UPF0725 protein At1g23970 (378 aa).

Belongs to the UPF0725 (EMB2204) family.

The chain is UPF0725 protein At1g23970 from Arabidopsis thaliana (Mouse-ear cress).